The sequence spans 332 residues: 2,3-diketo-L-gulonate reductase (332 aa).

H44 acts as the Proton donor in catalysis. NAD(+) contacts are provided by residues 168-174 (ITMVDMS), 224-225 (WK), and 304-306 (GHE).

This sequence belongs to the LDH2/MDH2 oxidoreductase family. DlgD subfamily. Homodimer.

It localises to the cytoplasm. The catalysed reaction is 3-dehydro-L-gulonate + NAD(+) = 2,3-dioxo-L-gulonate + NADH + H(+). It carries out the reaction 3-dehydro-L-gulonate + NADP(+) = 2,3-dioxo-L-gulonate + NADPH + H(+). Its function is as follows. Catalyzes the reduction of 2,3-diketo-L-gulonate in the presence of NADH, to form 3-keto-L-gulonate. The polypeptide is 2,3-diketo-L-gulonate reductase (Klebsiella oxytoca).